Reading from the N-terminus, the 2531-residue chain is Highly reducing polyketide synthase ausV (2531 aa).

The Ketosynthase family 3 (KS3) domain maps to 7-432 (STPIAIIGLS…GTNAHCVMET (426 aa)). Catalysis depends on for beta-ketoacyl synthase activity residues Cys180, His315, and His355. The interval 554–882 (FVFTGQGAQW…HHTLLESMGS (329 aa)) is malonyl-CoA:ACP transacylase (MAT) domain. The active-site For malonyltransferase activity is the Ser644. The segment at 939–1069 (HDLCGIRVED…GSVLAGTPSD (131 aa)) is N-terminal hotdog fold. One can recognise a PKS/mFAS DH domain in the interval 939-1238 (HDLCGIRVED…LATLSVRSGD (300 aa)). Residues 940–1236 (DLCGIRVEDD…LELATLSVRS (297 aa)) form a dehydratase (DH) domain region. His971 serves as the catalytic Proton acceptor; for dehydratase activity. Positions 1087-1238 (YVETTPRQAY…LATLSVRSGD (152 aa)) are C-terminal hotdog fold. Asp1152 (proton donor; for dehydratase activity) is an active-site residue. Residues 1414 to 1592 (SSYLRLHARN…DTGFSGVDIS (179 aa)) are methyltransferase (CMet) domain. Residues 1832-2133 (LRFVQDPAYW…SGGAKPGCSR (302 aa)) form an enoyl reductase (ER) domain region. Residues 2156-2331 (HGRALVPDFH…AGVSLSLGFI (176 aa)) form a ketoreductase (KR) domain region. The Carrier domain occupies 2444–2521 (AAATAVLDAL…ELARDLALRS (78 aa)). Ser2481 carries the O-(pantetheine 4'-phosphoryl)serine modification.

Its pathway is secondary metabolite biosynthesis; terpenoid biosynthesis. Highly reducing polyketide synthase; part of the gene cluster that mediates the biosynthesis of calidodehydroaustin, a fungal meroterpenoid. The first step of the pathway is the synthesis of 3,5-dimethylorsellinic acid by the polyketide synthase ausA. 3,5-dimethylorsellinic acid is then prenylated by the polyprenyl transferase ausN. Further epoxidation by the FAD-dependent monooxygenase ausM and cyclization by the probable terpene cyclase ausL lead to the formation of protoaustinoid A. Protoaustinoid A is then oxidized to spiro-lactone preaustinoid A3 by the combined action of the FAD-binding monooxygenases ausB and ausC, and the dioxygenase ausE. Acid-catalyzed keto-rearrangement and ring contraction of the tetraketide portion of preaustinoid A3 by ausJ lead to the formation of preaustinoid A4. The aldo-keto reductase ausK, with the help of ausH, is involved in the next step by transforming preaustinoid A4 into isoaustinone which is in turn hydroxylated by the P450 monooxygenase ausI to form austinolide. The cytochrome P450 monooxygenase ausG modifies austinolide to austinol. Austinol is further acetylated to austin by the O-acetyltransferase ausP, which spontaneously changes to dehydroaustin. The cytochrome P450 monooxygenase ausR then converts dehydroaustin is into 7-dehydrodehydroaustin. The hydroxylation catalyzed by ausR permits the O-acetyltransferase ausQ to add an additional acetyl group to the molecule, leading to the formation of acetoxydehydroaustin. The short chain dehydrogenase ausT catalyzes the reduction of the double bond present between carbon atoms 1 and 2 to convert 7-dehydrodehydroaustin into 1,2-dihydro-7-hydroxydehydroaustin. AusQ catalyzes not only an acetylation reaction but also the addition of the PKS ausV diketide product to 1,2-dihydro-7-hydroxydehydroaustin, forming precalidodehydroaustin. Finally, the iron/alpha-ketoglutarate-dependent dioxygenase converts precalidodehydroaustin into calidodehydroaustin. The sequence is that of Highly reducing polyketide synthase ausV from Aspergillus calidoustus.